Consider the following 95-residue polypeptide: Co-chaperonin GroES (95 aa).

The protein belongs to the GroES chaperonin family. In terms of assembly, heptamer of 7 subunits arranged in a ring. Interacts with the chaperonin GroEL.

It localises to the cytoplasm. Together with the chaperonin GroEL, plays an essential role in assisting protein folding. The GroEL-GroES system forms a nano-cage that allows encapsulation of the non-native substrate proteins and provides a physical environment optimized to promote and accelerate protein folding. GroES binds to the apical surface of the GroEL ring, thereby capping the opening of the GroEL channel. This is Co-chaperonin GroES from Desulfatibacillum aliphaticivorans.